The chain runs to 319 residues: Ribonuclease Z (319 aa).

Zn(2+) is bound by residues His62, His64, Asp66, His67, His139, Asp209, and His268. Residue Asp66 is the Proton acceptor of the active site.

This sequence belongs to the RNase Z family. In terms of assembly, homodimer. Zn(2+) serves as cofactor.

It catalyses the reaction Endonucleolytic cleavage of RNA, removing extra 3' nucleotides from tRNA precursor, generating 3' termini of tRNAs. A 3'-hydroxy group is left at the tRNA terminus and a 5'-phosphoryl group is left at the trailer molecule.. Functionally, zinc phosphodiesterase, which displays some tRNA 3'-processing endonuclease activity. Probably involved in tRNA maturation, by removing a 3'-trailer from precursor tRNA. In Pseudomonas putida (strain GB-1), this protein is Ribonuclease Z.